The sequence spans 500 residues: Aspartyl/glutamyl-tRNA(Asn/Gln) amidotransferase subunit B (500 aa).

The protein belongs to the GatB/GatE family. GatB subfamily. Heterotrimer of A, B and C subunits.

It catalyses the reaction L-glutamyl-tRNA(Gln) + L-glutamine + ATP + H2O = L-glutaminyl-tRNA(Gln) + L-glutamate + ADP + phosphate + H(+). The enzyme catalyses L-aspartyl-tRNA(Asn) + L-glutamine + ATP + H2O = L-asparaginyl-tRNA(Asn) + L-glutamate + ADP + phosphate + 2 H(+). Its function is as follows. Allows the formation of correctly charged Asn-tRNA(Asn) or Gln-tRNA(Gln) through the transamidation of misacylated Asp-tRNA(Asn) or Glu-tRNA(Gln) in organisms which lack either or both of asparaginyl-tRNA or glutaminyl-tRNA synthetases. The reaction takes place in the presence of glutamine and ATP through an activated phospho-Asp-tRNA(Asn) or phospho-Glu-tRNA(Gln). The chain is Aspartyl/glutamyl-tRNA(Asn/Gln) amidotransferase subunit B from Thermosynechococcus vestitus (strain NIES-2133 / IAM M-273 / BP-1).